The chain runs to 774 residues: Subtilisin-like protease SBT3.5 (774 aa).

Positions 1-23 (MRNCRVLLVLVLSLVIVLNVVRA) are cleaved as a signal peptide. Residues 24-108 (SDESKVHIVY…VMADSFYELA (85 aa)) constitute a propeptide, removed in mature form. An Inhibitor I9 domain is found at 29-108 (VHIVYLGEKQ…VMADSFYELA (80 aa)). In terms of domain architecture, Peptidase S8 spans 112–621 (TWDYLGLSVA…GGIVNPEKAA (510 aa)). The N-linked (GlcNAc...) asparagine glycan is linked to Asn-128. Residue Asp-142 is the Charge relay system of the active site. Residue Asn-201 is glycosylated (N-linked (GlcNAc...) asparagine). His-217 acts as the Charge relay system in catalysis. N-linked (GlcNAc...) asparagine glycans are attached at residues Asn-232, Asn-394, Asn-409, and Asn-539. The region spanning 383–478 (SLVYPENAGF…ELGTDVLLYI (96 aa)) is the PA domain. Catalysis depends on Ser-552, which acts as the Charge relay system. Asn-644, Asn-654, Asn-725, and Asn-755 each carry an N-linked (GlcNAc...) asparagine glycan.

This sequence belongs to the peptidase S8 family. Expressed in roots, leaves, stems, flower buds, developing siliques and mature seeds.

The protein localises to the secreted. It is found in the cell wall. Serine protease that cleaves the pectin methylesterase 17 (PME17) protein to release the PME17 mature form in the apoplasm. The protein is Subtilisin-like protease SBT3.5 of Arabidopsis thaliana (Mouse-ear cress).